Here is a 2566-residue protein sequence, read N- to C-terminus: Zinc finger protein GLI1 (2566 aa).

Disordered regions lie at residues 349–375, 430–508, and 985–1046; these read HHSS…SQSS, DIRR…RSTG, and KSIE…GDPD. Composition is skewed to polar residues over residues 434–444 and 457–492; these read TLSSNGNSSHT and WSPN…YQQH. The span at 493–508 shows a compositional bias: low complexity; it reads SGYTSTSGSSGNRSTG. Polar residues predominate over residues 993 to 1016; that stretch reads WQNQNVFSSRRNSTRDPSNNNNSG. Residues 1023-1035 are compositionally biased toward acidic residues; sequence DEPDVDDDEELDD. The C2H2-type 1; degenerate zinc finger occupies 1088-1110; sequence RECVRGTRPFKAQYMLVVHMRRH. C2H2-type zinc fingers lie at residues 1116-1140, 1146-1171, and 1177-1202; these read HKCI…LRSH, YQCE…NRTH, and YTCK…KTVH. Disordered regions lie at residues 1254–1313, 1465–1491, 1650–1677, 1727–1791, and 2067–2091; these read GNSN…PRDS, LSTT…TKQK, SKNM…NQNE, AAAS…MDND, and MHFS…NRPH. Composition is skewed to low complexity over residues 1661 to 1677 and 1727 to 1743; these read NNNE…NQNE and AAAS…TTAS. Positions 1752–1769 are enriched in basic residues; that stretch reads NHHHQKQQPKHSHQHQNR. Residues 1770–1791 show a composition bias toward polar residues; the sequence is TKSINSDNNYSNQDNVSTMDND. The span at 2070 to 2090 shows a compositional bias: low complexity; sequence SPHSYVHSSSSNSSPFNSNRP.

It belongs to the GLI C2H2-type zinc-finger protein family. As to expression, expressed in female-paired or unpaired males along the ventral surface in neurons and skin tegument cells. In virgin and mature females, expressed bilaterally along the edges of the body in neurons. In mature females, also expressed in skin tegument cells.

Its subcellular location is the nucleus. Probable transcription factor which plays an essential role in males to trigger female sexual development by inducing NRPS expression in male. NRPS produces the pheromone beta-alanyl-tryptamine (BATT), which stimulates female sexual development. In Schistosoma mansoni (Blood fluke), this protein is Zinc finger protein GLI1.